Here is a 106-residue protein sequence, read N- to C-terminus: Transcription initiation factor IIA subunit 2 (106 aa).

This sequence belongs to the TFIIA subunit 2 family. As to quaternary structure, TFIIA is a heterodimer of the large unprocessed subunit 1 and a small subunit gamma. It was originally believed to be a heterotrimer of an alpha, a beta and a gamma subunit.

Its subcellular location is the nucleus. TFIIA is a component of the transcription machinery of RNA polymerase II and plays an important role in transcriptional activation. TFIIA in a complex with TBP mediates transcriptional activity. Protein involved in the resistance to X.oryzae. The chain is Transcription initiation factor IIA subunit 2 (TFIIAy) from Oryza sativa subsp. indica (Rice).